The chain runs to 452 residues: Pup--protein ligase (452 aa).

A Mg(2+)-binding site is contributed by E9. R53 provides a ligand contact to ATP. Position 55 (Y55) interacts with Mg(2+). D57 (proton acceptor) is an active-site residue. A Mg(2+)-binding site is contributed by E63. 2 residues coordinate ATP: T66 and W419.

This sequence belongs to the Pup ligase/Pup deamidase family. Pup-conjugating enzyme subfamily.

The enzyme catalyses ATP + [prokaryotic ubiquitin-like protein]-L-glutamate + [protein]-L-lysine = ADP + phosphate + N(6)-([prokaryotic ubiquitin-like protein]-gamma-L-glutamyl)-[protein]-L-lysine.. It participates in protein degradation; proteasomal Pup-dependent pathway. Its pathway is protein modification; protein pupylation. Functionally, catalyzes the covalent attachment of the prokaryotic ubiquitin-like protein modifier Pup to the proteasomal substrate proteins, thereby targeting them for proteasomal degradation. This tagging system is termed pupylation. The ligation reaction involves the side-chain carboxylate of the C-terminal glutamate of Pup and the side-chain amino group of a substrate lysine. This chain is Pup--protein ligase, found in Mycolicibacterium vanbaalenii (strain DSM 7251 / JCM 13017 / BCRC 16820 / KCTC 9966 / NRRL B-24157 / PYR-1) (Mycobacterium vanbaalenii).